The following is a 224-amino-acid chain: MTAPQEPEDAAGSIFSTSGDRAVADAAERAKVTASRNIPVFDDLPLPADTANLRKGVDFNDALLALLPLVGVWRGEGEGRGPHGDYRFGQQIVVSHDGGDYLNWEARSWRLTESGEYDRVGLRETGFWRFVSDPADPSESQAIELLLAHSAGYIELFYGHPRNQSSWELVTDALARSKSGMLVGGAKRLYGIVEGGDLAYVEERVDADGGLVPHLSARLARYVG.

The GXWXGXG motif lies at 71 to 77 (GVWRGEG). The heme b site is built by Lys187 and His214.

This sequence belongs to the nitrobindin family. In terms of assembly, homodimer. Requires heme b as cofactor.

The enzyme catalyses peroxynitrite = nitrate. It functions in the pathway nitrogen metabolism. In terms of biological role, heme-binding protein able to scavenge peroxynitrite and to protect free L-tyrosine against peroxynitrite-mediated nitration, by acting as a peroxynitrite isomerase that converts peroxynitrite to nitrate. Therefore, this protein likely plays a role in peroxynitrite sensing and in the detoxification of reactive nitrogen and oxygen species (RNS and ROS, respectively). Is able to bind nitric oxide (NO) in vitro, but may act as a sensor of peroxynitrite levels in vivo. This is Peroxynitrite isomerase 2 from Mycobacterium sp. (strain JLS).